A 201-amino-acid polypeptide reads, in one-letter code: Glycerol-3-phosphate acyltransferase (201 aa).

Transmembrane regions (helical) follow at residues 4 to 24, 55 to 75, 80 to 100, 110 to 130, and 152 to 174; these read LVAA…LVLT, LATL…VWVL, MVPV…WLGF, IGTL…TWLV, and FALY…MGFY.

It belongs to the PlsY family. Probably interacts with PlsX.

The protein localises to the cell inner membrane. The catalysed reaction is an acyl phosphate + sn-glycerol 3-phosphate = a 1-acyl-sn-glycero-3-phosphate + phosphate. It functions in the pathway lipid metabolism; phospholipid metabolism. In terms of biological role, catalyzes the transfer of an acyl group from acyl-phosphate (acyl-PO(4)) to glycerol-3-phosphate (G3P) to form lysophosphatidic acid (LPA). This enzyme utilizes acyl-phosphate as fatty acyl donor, but not acyl-CoA or acyl-ACP. The protein is Glycerol-3-phosphate acyltransferase of Paramagnetospirillum magneticum (strain ATCC 700264 / AMB-1) (Magnetospirillum magneticum).